The chain runs to 78 residues: Large ribosomal subunit protein bL28 (78 aa).

Belongs to the bacterial ribosomal protein bL28 family.

The polypeptide is Large ribosomal subunit protein bL28 (Acinetobacter baylyi (strain ATCC 33305 / BD413 / ADP1)).